We begin with the raw amino-acid sequence, 1452 residues long: ABC multidrug transporter A (1452 aa).

A disordered region spans residues 1 to 20; the sequence is MNESHEAGKNSSTNVEEREE. N-linked (GlcNAc...) asparagine glycosylation is found at asparagine 2, asparagine 10, asparagine 228, asparagine 287, and asparagine 311. The ABC transporter 1 domain occupies 110 to 363; it reads LKTLSLARIA…FLQMGFVCPD (254 aa). Helical transmembrane passes span 474–494, 508–528, 554–574, 583–603, 616–636, and 725–745; these read VTIS…SIFY, ALLF…MLTL, MIMD…VLYF, GAFF…SMFF, VLPF…FAIP, and IGVI…ATDF. The ABC transporter 2 domain maps to 802-1044; that stretch reads FQWKDVCFDI…ILIDYFVRNG (243 aa). 838 to 845 lines the ATP pocket; the sequence is GVSGAGKT. The next 5 membrane-spanning stretches (helical) occupy residues 1153–1173, 1183–1203, 1223–1243, 1271–1291, and 1297–1317; these read ALCV…PNTI, IFML…HFVA, FLIA…VLMF, LMIW…IAAF, and AGNL…VLAT. Asparagine 1350, asparagine 1365, and asparagine 1391 each carry an N-linked (GlcNAc...) asparagine glycan. A helical transmembrane segment spans residues 1418–1438; the sequence is FGLMWVFIVFNIFAACSLYWW.

Belongs to the ABC transporter superfamily. ABCG family. PDR (TC 3.A.1.205) subfamily.

Its subcellular location is the membrane. ABC transporter that seems not to be involved in the efflux of toxic substances, at least not the classical compounds such as itraconazole, amphotericin B, voriconazole, posaconazole, ravuconazole, or echinocandins. The sequence is that of ABC multidrug transporter A from Aspergillus fumigatus (Neosartorya fumigata).